Here is an 88-residue protein sequence, read N- to C-terminus: Alpha-latrotoxin-associated low molecular weight protein-2 (88 aa).

The first 19 residues, 1–19 (MLKLICIAFLVTVLTLVAG), serve as a signal peptide directing secretion. Gln20 bears the Pyrrolidone carboxylic acid mark. Cystine bridges form between Cys30-Cys66, Cys46-Cys62, and Cys49-Cys75.

Belongs to the arthropod CHH/MIH/GIH/VIH hormone family. In terms of processing, the N-terminus is blocked. As to expression, expressed by the venom gland.

The protein resides in the secreted. Functionally, may increase the toxicity of alpha-latrotoxin and/or other venom components. Is non-toxic to mice and to the cockroach Periplaneta americana. This Latrodectus tredecimguttatus (Mediterranean black widow spider) protein is Alpha-latrotoxin-associated low molecular weight protein-2.